An 85-amino-acid polypeptide reads, in one-letter code: Small ribosomal subunit protein bS18c (85 aa).

It belongs to the bacterial ribosomal protein bS18 family. Part of the 30S ribosomal subunit.

Its subcellular location is the plastid. The protein resides in the chloroplast. The protein is Small ribosomal subunit protein bS18c of Tupiella akineta (Green alga).